The chain runs to 763 residues: Translation initiation factor IF-2 (763 aa).

The disordered stretch occupies residues Lys-52 to Lys-178. Positions Ser-65 to Glu-82 are enriched in basic and acidic residues. Positions Thr-86–Asn-96 are enriched in polar residues. Basic and acidic residues-rich tracts occupy residues Arg-105–Asp-116 and Lys-123–Lys-135. A compositionally biased stretch (basic residues) spans Lys-136–Lys-145. Residues Asn-146–Asn-161 show a composition bias toward low complexity. A compositionally biased stretch (basic and acidic residues) spans Lys-162–Lys-178. Positions Glu-265–Lys-434 constitute a tr-type G domain. The segment at Gly-274–Thr-281 is G1. A GTP-binding site is contributed by Gly-274–Thr-281. A G2 region spans residues Gly-299–His-303. Positions Asp-320–Gly-323 are G3. GTP is bound by residues Asp-320–His-324 and Asn-374–Asp-377. A G4 region spans residues Asn-374–Asp-377. The interval Ser-410–Arg-412 is G5.

Belongs to the TRAFAC class translation factor GTPase superfamily. Classic translation factor GTPase family. IF-2 subfamily.

Its subcellular location is the cytoplasm. One of the essential components for the initiation of protein synthesis. Protects formylmethionyl-tRNA from spontaneous hydrolysis and promotes its binding to the 30S ribosomal subunits. Also involved in the hydrolysis of GTP during the formation of the 70S ribosomal complex. In Finegoldia magna (strain ATCC 29328 / DSM 20472 / WAL 2508) (Peptostreptococcus magnus), this protein is Translation initiation factor IF-2.